A 168-amino-acid chain; its full sequence is Phosphopantetheine adenylyltransferase (168 aa).

Substrate is bound at residue S8. Residues 8–9 (SF) and H16 each bind ATP. The substrate site is built by K40, A72, and R86. ATP contacts are provided by residues 87 to 89 (GLR), E97, and 122 to 128 (YSFLSSS).

This sequence belongs to the bacterial CoaD family. As to quaternary structure, homohexamer. It depends on Mg(2+) as a cofactor.

It is found in the cytoplasm. The enzyme catalyses (R)-4'-phosphopantetheine + ATP + H(+) = 3'-dephospho-CoA + diphosphate. Its pathway is cofactor biosynthesis; coenzyme A biosynthesis; CoA from (R)-pantothenate: step 4/5. Functionally, reversibly transfers an adenylyl group from ATP to 4'-phosphopantetheine, yielding dephospho-CoA (dPCoA) and pyrophosphate. The chain is Phosphopantetheine adenylyltransferase from Trichodesmium erythraeum (strain IMS101).